The sequence spans 193 residues: uncharacterized protein (193 aa).

Positions 1 to 14 (MSTSLLFSLSPSSS) are cleaved as a signal peptide.

This is an uncharacterized protein from Saccharomyces cerevisiae (strain ATCC 204508 / S288c) (Baker's yeast).